The primary structure comprises 225 residues: Urease accessory protein UreF (225 aa).

It belongs to the UreF family. As to quaternary structure, ureD, UreF and UreG form a complex that acts as a GTP-hydrolysis-dependent molecular chaperone, activating the urease apoprotein by helping to assemble the nickel containing metallocenter of UreC. The UreE protein probably delivers the nickel.

It localises to the cytoplasm. In terms of biological role, required for maturation of urease via the functional incorporation of the urease nickel metallocenter. The polypeptide is Urease accessory protein UreF (Geobacillus kaustophilus (strain HTA426)).